A 201-amino-acid chain; its full sequence is MSRYRGPRFKKIRRLGALPGLTSKRPRAGSDLRNQSRAGKKSQYRIRLEEKQKLRFHYGLTERQLLKYVRIAAKAKGSTGQVLLQLLEMRLDNILFRLGMASTIPRARQLVNHRHILVNGRIVDIPSYRCKPRDIITAKDEQKSRVMIQNSLDSFPQEELPKHLTLHPFQYKGLVNHIIDSKWIGLKINELLVVEYYSRQT.

The segment at 20–43 (GLTSKRPRAGSDLRNQSRAGKKSQ) is disordered. One can recognise an S4 RNA-binding domain in the interval 89 to 150 (MRLDNILFRL…EQKSRVMIQN (62 aa)).

The protein belongs to the universal ribosomal protein uS4 family. Part of the 30S ribosomal subunit. Contacts protein S5. The interaction surface between S4 and S5 is involved in control of translational fidelity.

It localises to the plastid. The protein resides in the chloroplast. Functionally, one of the primary rRNA binding proteins, it binds directly to 16S rRNA where it nucleates assembly of the body of the 30S subunit. In terms of biological role, with S5 and S12 plays an important role in translational accuracy. The sequence is that of Small ribosomal subunit protein uS4c (rps4) from Populus alba (White poplar).